Reading from the N-terminus, the 413-residue chain is Putative competence-damage inducible protein (413 aa).

Belongs to the CinA family.

In Pediococcus pentosaceus (strain ATCC 25745 / CCUG 21536 / LMG 10740 / 183-1w), this protein is Putative competence-damage inducible protein.